The following is a 780-amino-acid chain: Pendrin (780 aa).

At Met1–Asp87 the chain is on the cytoplasmic side. Residues Ile88–Leu108 traverse the membrane as a helical segment. A topological domain (extracellular) is located at residue Ala109. The helical transmembrane segment at Ala110–Phe130 threads the bilayer. Topologically, residues Gly131 to His135 are cytoplasmic. The helical transmembrane segment at Ile136 to Ala156 threads the bilayer. Topologically, residues Pro157–Thr191 are extracellular. Residues Leu192–Val212 traverse the membrane as a helical segment. Residues Arg213–Pro218 are Cytoplasmic-facing. Residues Leu219–Val239 traverse the membrane as a helical segment. Residues Leu240–Asn263 are Extracellular-facing. Residues Ile264–Ala284 form a helical membrane-spanning segment. Topologically, residues Val285 to Lys295 are cytoplasmic. A helical membrane pass occupies residues Ile296 to Gly316. At Ala317–Gly344 the chain is on the extracellular side. The helical transmembrane segment at Leu345 to Val365 threads the bilayer. Topologically, residues Ser366 to Glu384 are cytoplasmic. Residues Phe385 to Thr405 traverse the membrane as a helical segment. The Extracellular segment spans residues Ala406–Gln421. The chain crosses the membrane as a helical span at residues Val422–Leu442. The Cytoplasmic portion of the chain corresponds to Glu443–Ser448. A helical membrane pass occupies residues Val449–Pro469. The Extracellular segment spans residues Arg470 to Cys486. Residues Ile487–Leu507 traverse the membrane as a helical segment. The Cytoplasmic portion of the chain corresponds to Thr508–Ser780. Positions His535–Leu729 constitute an STAS domain.

This sequence belongs to the SLC26A/SulP transporter (TC 2.A.53) family. As to expression, highly expressed in the kidney (at protein level).

Its subcellular location is the cell membrane. It localises to the apical cell membrane. It carries out the reaction chloride(in) = chloride(out). The catalysed reaction is iodide(out) = iodide(in). The enzyme catalyses hydrogencarbonate(in) + chloride(out) = hydrogencarbonate(out) + chloride(in). It catalyses the reaction iodide(in) + hydrogencarbonate(out) = iodide(out) + hydrogencarbonate(in). It carries out the reaction iodide(in) + chloride(out) = iodide(out) + chloride(in). The catalysed reaction is formate(in) + chloride(out) = formate(out) + chloride(in). Functionally, sodium-independent transporter of chloride and iodide. Mediates electroneutral chloride-bicarbonate and chloride-formate exchange with 1:1 stoichiometry. Mediates electroneutral iodide-chloride and iodide-bicarbonate exchange. The polypeptide is Pendrin (Slc26a4) (Rattus norvegicus (Rat)).